A 219-amino-acid chain; its full sequence is Oligoribonuclease (219 aa).

The Exonuclease domain maps to 19–184; it reads LVWVDLEMTG…ADIVESIREL (166 aa). Tyr141 is an active-site residue.

It belongs to the oligoribonuclease family.

The protein resides in the cytoplasm. Its function is as follows. 3'-to-5' exoribonuclease specific for small oligoribonucleotides. The chain is Oligoribonuclease from Corynebacterium glutamicum (strain R).